The primary structure comprises 158 residues: 6,7-dimethyl-8-ribityllumazine synthase (158 aa).

5-amino-6-(D-ribitylamino)uracil contacts are provided by residues phenylalanine 22, 56–58 (ALE), and 80–82 (VVI). 85 to 86 (ET) serves as a coordination point for (2S)-2-hydroxy-3-oxobutyl phosphate. Catalysis depends on histidine 88, which acts as the Proton donor. A 5-amino-6-(D-ribitylamino)uracil-binding site is contributed by asparagine 113. Arginine 127 contacts (2S)-2-hydroxy-3-oxobutyl phosphate.

The protein belongs to the DMRL synthase family.

It carries out the reaction (2S)-2-hydroxy-3-oxobutyl phosphate + 5-amino-6-(D-ribitylamino)uracil = 6,7-dimethyl-8-(1-D-ribityl)lumazine + phosphate + 2 H2O + H(+). Its pathway is cofactor biosynthesis; riboflavin biosynthesis; riboflavin from 2-hydroxy-3-oxobutyl phosphate and 5-amino-6-(D-ribitylamino)uracil: step 1/2. Catalyzes the formation of 6,7-dimethyl-8-ribityllumazine by condensation of 5-amino-6-(D-ribitylamino)uracil with 3,4-dihydroxy-2-butanone 4-phosphate. This is the penultimate step in the biosynthesis of riboflavin. In Neisseria meningitidis serogroup C (strain 053442), this protein is 6,7-dimethyl-8-ribityllumazine synthase.